Consider the following 78-residue polypeptide: Large ribosomal subunit protein bL28 (78 aa).

Residues 1-33 are disordered; sequence MARKDDVTGEGPVTGNSVSDSNQKTNRRFKRNL. Residues 14 to 24 are compositionally biased toward polar residues; sequence TGNSVSDSNQK.

Belongs to the bacterial ribosomal protein bL28 family.

This is Large ribosomal subunit protein bL28 from Salinibacter ruber (strain DSM 13855 / M31).